The primary structure comprises 621 residues: SH2B adapter protein 2 (621 aa).

A Phosphotyrosine modification is found at Y47. The residue at position 130 (S130) is a Phosphoserine. The segment at 143–166 is disordered; it reads RRSSPEPDGGATPKAAEPASEPRD. The 114-residue stretch at 186-299 folds into the PH domain; sequence DIQREGALRF…WVADIQGCVD (114 aa). S303 is modified (phosphoserine). Positions 409–507 constitute an SH2 domain; it reads WFHGTLSRVK…SADITLRSYV (99 aa). Disordered stretches follow at residues 507–528 and 549–611; these read VRAQ…PVPA and PASP…LGRA. Positions 552-571 are enriched in low complexity; it reads PSNGAGASSSSGSSSSATSL. S597 is subject to Phosphoserine. A Phosphotyrosine modification is found at Y618.

This sequence belongs to the SH2B adapter family. As to quaternary structure, homodimer. Interacts with KIT/c-KIT, SHC1, EPOR, PDGFR, VAV1 and VAV3. Interacts (via N-terminal region) with SHC1. Interacts (via the phosphorylated C-terminus) with GRB2. Interacts (via its SH2 domain) with EPOR, INSR and KIT. Interacts with GRB2 after B-cell antigen receptor stimulation. Interacts (via PH domain) with VAV3. Interacts with NTRK1, NTRK2 and NTRK3 (phosphorylated); after stimulation of the receptor by its extracellular ligand and subsequent autophosphorylation of the receptor. Binds INSR, GRB2, ASB6 and CAP. Insulin stimulation leads to dissociation of CAP. Binds CBS only when SH2B2/APS has become phosphorylated. INSR binding does not depend on the phosphorylation of SH2B2/APS. Tyrosine phosphorylated by JAK2, KIT and other kinases activated by B-cell receptor in response to stimulation with cytokines, IL3, IL5, PDGF, IGF1, IGF2, CSF2/GM-CSF and cross-linking of the B-cell receptor complex. As to expression, strongly expressed in brain; also expressed in spleen, kidney and skeletal muscle, and at low levels in small intestine and bone marrow. Strongly expressed in B-cell lines, but not T-cell lines. Also expressed in myeloid and fibroblast cell lines.

Its subcellular location is the cytoplasm. The protein resides in the cell membrane. In terms of biological role, adapter protein for several members of the tyrosine kinase receptor family. Involved in multiple signaling pathways. May be involved in coupling from immunoreceptor to Ras signaling. Acts as a negative regulator of cytokine signaling in collaboration with CBL. Binds to EPOR and suppresses EPO-induced STAT5 activation, possibly through a masking effect on STAT5 docking sites in EPOR. Suppresses PDGF-induced mitogenesis. May induce cytoskeletal reorganization via interaction with VAV3. The chain is SH2B adapter protein 2 (Sh2b2) from Mus musculus (Mouse).